We begin with the raw amino-acid sequence, 412 residues long: Subtilisin-like protease 6 (412 aa).

The N-terminal stretch at 1–20 is a signal peptide; it reads MGFITKAIPIVLAALSTVNG. Positions 21–127 are excised as a propeptide; that stretch reads AKILEAGPHA…VRTSTNGTNL (107 aa). The 85-residue stretch at 36–120 folds into the Inhibitor I9 domain; the sequence is KYIVVMKREV…YIEPDFVVRT (85 aa). 2 N-linked (GlcNAc...) asparagine glycosylation sites follow: asparagine 123 and asparagine 126. Residues 135 to 412 form the Peptidase S8 domain; it reads SWGLARVSSK…SKLIYNGSGK (278 aa). Active-site charge relay system residues include aspartate 167 and histidine 198. N-linked (GlcNAc...) asparagine glycans are attached at residues asparagine 252 and asparagine 264. The active-site Charge relay system is the serine 358. Asparagine 408 is a glycosylation site (N-linked (GlcNAc...) asparagine).

The protein belongs to the peptidase S8 family.

Its subcellular location is the secreted. In terms of biological role, secreted subtilisin-like serine protease with keratinolytic activity that contributes to pathogenicity. This chain is Subtilisin-like protease 6 (SUB6), found in Trichophyton tonsurans (Scalp ringworm fungus).